A 791-amino-acid polypeptide reads, in one-letter code: uncharacterized protein (791 aa).

The tract at residues 267-288 is disordered; that stretch reads APGESSAQSSYEQSTRAGDSAP. A compositionally biased stretch (polar residues) spans 271 to 283; the sequence is SSAQSSYEQSTRA.

This is an uncharacterized protein from Treponema pallidum (strain Nichols).